The sequence spans 885 residues: Alanine--tRNA ligase (885 aa).

Residues His571, His575, Cys674, and His678 each coordinate Zn(2+).

Belongs to the class-II aminoacyl-tRNA synthetase family. Zn(2+) serves as cofactor.

The protein localises to the cytoplasm. The catalysed reaction is tRNA(Ala) + L-alanine + ATP = L-alanyl-tRNA(Ala) + AMP + diphosphate. In terms of biological role, catalyzes the attachment of alanine to tRNA(Ala) in a two-step reaction: alanine is first activated by ATP to form Ala-AMP and then transferred to the acceptor end of tRNA(Ala). Also edits incorrectly charged Ser-tRNA(Ala) and Gly-tRNA(Ala) via its editing domain. The protein is Alanine--tRNA ligase of Clavibacter michiganensis subsp. michiganensis (strain NCPPB 382).